A 920-amino-acid chain; its full sequence is Vacuolar membrane protease (920 aa).

Over 1-20 (MASSRAQRFNPIAFTPWPVT) the chain is Cytoplasmic. Residues 21-41 (CITTIVYLALLIPILVINLVV) form a helical membrane-spanning segment. The Vacuolar segment spans residues 42–378 (PSAPETNPKG…AFAVFRLHTL (337 aa)). N-linked (GlcNAc...) asparagine glycans are attached at residues asparagine 53, asparagine 116, and asparagine 119. Histidine 175 and aspartate 187 together coordinate Zn(2+). The active-site Proton acceptor is the glutamate 221. Position 222 (glutamate 222) interacts with Zn(2+). The N-linked (GlcNAc...) asparagine glycan is linked to asparagine 238. 2 residues coordinate Zn(2+): glutamate 247 and histidine 306. The chain crosses the membrane as a helical span at residues 379-399 (FAISVALLVIAPLVIFITSVI). Residues 400 to 433 (LSKTDRMYLFSMSKSLEGTGDQVSLRGLRGFSRT) are Cytoplasmic-facing. A helical transmembrane segment spans residues 434-454 (PIILVIATTIPICLAYLLEKV). The Vacuolar portion of the chain corresponds to 455 to 463 (NPYIVHSSQ). Residues 464–484 (FSVWSMMFSAWIFLAWFLACA) form a helical membrane-spanning segment. At 485 to 495 (ADFFRPSALHR) the chain is on the cytoplasmic side. Residues 496 to 516 (AYSYTWIFVATWIMLVINTVY) form a helical membrane-spanning segment. Residues 517–520 (ANQK) lie on the Vacuolar side of the membrane. A helical transmembrane segment spans residues 521 to 541 (GIAAGYFLLFYFAGAFLATWI). The Cytoplasmic segment spans residues 542–659 (SYLELFALPR…TLPRWTWVLQ (118 aa)). The segment at 556 to 605 (ARQTTGRRPSSLSSRLLTSSADELRSNASPSTAEFPGAAGEDTDPTESTS) is disordered. Positions 559-575 (TTGRRPSSLSSRLLTSS) are enriched in low complexity. A helical transmembrane segment spans residues 660-680 (LLLLAPIVLILVGQLALFLTA). Residues 681–693 (SMCQVGSDGVSTF) lie on the Vacuolar side of the membrane. A helical transmembrane segment spans residues 694–714 (VVYLACAVFTTLLCIPLFPLI). Residues 715–720 (HRFTYH) lie on the Cytoplasmic side of the membrane. A helical membrane pass occupies residues 721-741 (IPTFLFLVFIGTLIYNLVAFP). Topologically, residues 742–920 (FSPANRLKTF…VEASHSFTIQ (179 aa)) are vacuolar. 3 N-linked (GlcNAc...) asparagine glycosylation sites follow: asparagine 760, asparagine 788, and asparagine 832.

This sequence belongs to the peptidase M28 family. It depends on Zn(2+) as a cofactor.

Its subcellular location is the vacuole membrane. Functionally, may be involved in vacuolar sorting and osmoregulation. In Ajellomyces capsulatus (strain H143) (Darling's disease fungus), this protein is Vacuolar membrane protease.